Consider the following 255-residue polypeptide: HLA class II histocompatibility antigen, DQ alpha 2 chain (255 aa).

The first 23 residues, 1–23 (MILNKALLLGALALTAVMSPCGG), serve as a signal peptide directing secretion. The tract at residues 24–110 (EDIVADHVAS…RQSNSTAATN (87 aa)) is alpha-1. At 24-217 (EDIVADHVAS…IPAPMSELTE (194 aa)) the chain is on the extracellular side. N-linked (GlcNAc...) asparagine glycosylation is found at asparagine 104 and asparagine 144. The alpha-2 stretch occupies residues 111-204 (EVPEVTVFSK…GLDEPLLKHW (94 aa)). In terms of domain architecture, Ig-like C1-type spans 113 to 205 (PEVTVFSKFP…LDEPLLKHWE (93 aa)). An intrachain disulfide couples cysteine 133 to cysteine 189. Positions 205–217 (EPEIPAPMSELTE) are connecting peptide. A helical membrane pass occupies residues 218-240 (TLVCALGLSVGLMGIVVGTVFII). Over 241–255 (QGLRSVGASRHQGLL) the chain is Cytoplasmic.

It belongs to the MHC class II family. Heterodimer of an alpha and a beta subunit; also referred as MHC class II molecule. Dimer formation with HLA-DQB2, but not with HLA-DQB1, is required for efficient exit from the endoplasmic reticulum (ER). In the ER, forms a heterononamer; 3 MHC class II molecules bind to a CD74 homotrimer (also known as invariant chain or HLA class II histocompatibility antigen gamma chain). In the endosomal/lysosomal system; CD74 undergoes sequential degradation by various proteases; leaving a small fragment termed CLIP on each MHC class II molecule. MHC class II molecule interacts with HLA_DM, and HLA_DO in B-cells, in order to release CLIP and facilitate the binding of antigenic peptides. Association with HLA-DMA also occurs in skin Langerhans cells, in post-Golgi compartments. As to expression, restricted to skin Langerhans cells, although some expression at low levels may occur at the surface of B lymphoblastoid cells.

Its subcellular location is the cell membrane. It is found in the endoplasmic reticulum membrane. The protein resides in the golgi apparatus. The protein localises to the trans-Golgi network membrane. It localises to the endosome membrane. Its subcellular location is the lysosome membrane. Functionally, binds peptides derived from antigens that access the endocytic route of antigen presenting cells (APC) and presents them on the cell surface for recognition by the CD4 T-cells. The peptide binding cleft accommodates peptides of 10-30 residues. The peptides presented by MHC class II molecules are generated mostly by degradation of proteins that access the endocytic route, where they are processed by lysosomal proteases and other hydrolases. Exogenous antigens that have been endocytosed by the APC are thus readily available for presentation via MHC II molecules, and for this reason this antigen presentation pathway is usually referred to as exogenous. As membrane proteins on their way to degradation in lysosomes as part of their normal turn-over are also contained in the endosomal/lysosomal compartments, exogenous antigens must compete with those derived from endogenous components. Autophagy is also a source of endogenous peptides, autophagosomes constitutively fuse with MHC class II loading compartments. In addition to APCs, other cells of the gastrointestinal tract, such as epithelial cells, express MHC class II molecules and CD74 and act as APCs, which is an unusual trait of the GI tract. To produce a MHC class II molecule that presents an antigen, three MHC class II molecules (heterodimers of an alpha and a beta chain) associate with a CD74 trimer in the ER to form a heterononamer. Soon after the entry of this complex into the endosomal/lysosomal system where antigen processing occurs, CD74 undergoes a sequential degradation by various proteases, including CTSS and CTSL, leaving a small fragment termed CLIP (class-II-associated invariant chain peptide). The removal of CLIP is facilitated by HLA-DM via direct binding to the alpha-beta-CLIP complex so that CLIP is released. HLA-DM stabilizes MHC class II molecules until primary high affinity antigenic peptides are bound. The MHC II molecule bound to a peptide is then transported to the cell membrane surface. In B-cells, the interaction between HLA-DM and MHC class II molecules is regulated by HLA-DO. Primary dendritic cells (DCs) also to express HLA-DO. Lysosomal microenvironment has been implicated in the regulation of antigen loading into MHC II molecules, increased acidification produces increased proteolysis and efficient peptide loading. The polypeptide is HLA class II histocompatibility antigen, DQ alpha 2 chain (HLA-DQA2) (Homo sapiens (Human)).